The sequence spans 87 residues: Tan_10cys (87 aa).

Residues 1-21 (MNLKVLFLLAMVLVTLCLGED) form the signal peptide. A propeptide spanning residues 22–27 (RVTDRR) is cleaved from the precursor.

It belongs to the teretoxin C (TC) superfamily. Post-translationally, contains 5 disulfide bonds. In terms of tissue distribution, expressed by the venom duct.

It localises to the secreted. The protein is Tan_10cys of Terebra anilis (Auger snail).